Consider the following 162-residue polypeptide: UPF0262 protein AZC_3148 (162 aa).

This sequence belongs to the UPF0262 family.

The chain is UPF0262 protein AZC_3148 from Azorhizobium caulinodans (strain ATCC 43989 / DSM 5975 / JCM 20966 / LMG 6465 / NBRC 14845 / NCIMB 13405 / ORS 571).